A 51-amino-acid chain; its full sequence is Large ribosomal subunit protein eL39 (51 aa).

It belongs to the eukaryotic ribosomal protein eL39 family.

This chain is Large ribosomal subunit protein eL39, found in Thermococcus sibiricus (strain DSM 12597 / MM 739).